The chain runs to 261 residues: High-affinity zinc uptake system membrane protein ZnuB (261 aa).

A run of 7 helical transmembrane segments spans residues 8 to 28 (GWLA…FIIW), 54 to 74 (IDSF…LVWM), 84 to 104 (TILS…ISLM), 129 to 149 (CIIA…WNSI), 179 to 199 (ICIS…LLII), 215 to 235 (IGFS…LSFF), and 238 to 254 (VPTS…VYLL).

The protein belongs to the ABC-3 integral membrane protein family.

It is found in the cell membrane. Its function is as follows. Involved in the high-affinity zinc uptake transport system. This chain is High-affinity zinc uptake system membrane protein ZnuB (znuB), found in Buchnera aphidicola subsp. Schizaphis graminum (strain Sg).